We begin with the raw amino-acid sequence, 236 residues long: Lipoarabinomannan carrier protein LprG (236 aa).

An N-terminal signal peptide occupies residues 1-26 (MRTPRRHCRRIAVLAAVSIAATVVAG). A lipid anchor (N-palmitoyl cysteine) is attached at Cys27. Residue Cys27 is the site of S-diacylglycerol cysteine attachment.

The protein belongs to the LppX/LprAFG lipoprotein family. Post-translationally, modified by Lgt on Cys-27 with an S-linked diacylglyceral, signal peptide is removed by LspA, Cys-27 is further modifed with a fatty acid on its amino group by Lnt yielding a triacylated protein.

The protein localises to the cell inner membrane. It localises to the secreted. Its subcellular location is the cell wall. In terms of biological role, helps membrane protein Mb1445c (P55) transport triacylglycerides (TAG) across the inner cell membrane into the periplasm and probably ultimately to the outer membrane. Binds TAG in its hydrophobic cavity and transfers it between lipid bilayers. TAG probably regulates lipid metabolism and growth regulation and plays a structural role in the outer membrane. Binds di- and triacylated phosphatidyl-myo-inositol mannosides (PIMs), and glycolipid lipoglycan modulins lipoarabinomannan (LAM) and lipomannan (LM), facilitating their recognition by TLR2. Required for activity of drug efflux transporter Mb1445c. Required, probably with Mb1445c, for normal surface localization of LAM. Functionally, constitutes a host TLR2 agonist (toll-like receptor). This Mycobacterium bovis (strain ATCC BAA-935 / AF2122/97) protein is Lipoarabinomannan carrier protein LprG.